We begin with the raw amino-acid sequence, 922 residues long: Probable dipeptidyl-aminopeptidase B (922 aa).

A compositionally biased stretch (basic and acidic residues) spans 1–16; sequence MATEKGHSRDDEERVP. The interval 1-21 is disordered; that stretch reads MATEKGHSRDDEERVPLTRGS. Residues 1 to 99 lie on the Cytoplasmic side of the membrane; sequence MATEKGHSRD…KPMHKSVKIA (99 aa). The chain crosses the membrane as a helical; Signal-anchor for type II membrane protein span at residues 100–120; it reads LWSLLFLSLGGWSLAFVLFIF. Residues 121 to 922 are Vacuolar-facing; that stretch reads RSHDTYQTPI…AGLYKFKHLC (802 aa). N-linked (GlcNAc...) asparagine glycans are attached at residues N135, N200, N351, and N574. S756 serves as the catalytic Charge relay system. A glycan (N-linked (GlcNAc...) asparagine) is linked at N815. Catalysis depends on charge relay system residues D833 and H866. N902 is a glycosylation site (N-linked (GlcNAc...) asparagine).

This sequence belongs to the peptidase S9B family.

The protein resides in the vacuole membrane. The enzyme catalyses Release of an N-terminal dipeptide, Xaa-Yaa-|-Zaa-, from a polypeptide, preferentially when Yaa is Pro, provided Zaa is neither Pro nor hydroxyproline.. In terms of biological role, type IV dipeptidyl-peptidase which removes N-terminal dipeptides sequentially from polypeptides having unsubstituted N-termini provided that the penultimate residue is proline. The protein is Probable dipeptidyl-aminopeptidase B (DAPB) of Ajellomyces capsulatus (strain NAm1 / WU24) (Darling's disease fungus).